Consider the following 80-residue polypeptide: UPF0291 protein EF_1580 (80 aa).

Positions 60 to 80 (TDVTPEKLKKIQREKGLHNRK) are disordered. A compositionally biased stretch (basic and acidic residues) spans 63–80 (TPEKLKKIQREKGLHNRK).

The protein belongs to the UPF0291 family.

It is found in the cytoplasm. This Enterococcus faecalis (strain ATCC 700802 / V583) protein is UPF0291 protein EF_1580.